Reading from the N-terminus, the 361-residue chain is Aromatic amino acid aminotransferase (361 aa).

An N6-(pyridoxal phosphate)lysine modification is found at lysine 215.

The protein belongs to the class-II pyridoxal-phosphate-dependent aminotransferase family. In terms of assembly, homodimer. The cofactor is pyridoxal 5'-phosphate.

It carries out the reaction an aromatic L-alpha-amino acid + 2-oxoglutarate = an aromatic oxo-acid + L-glutamate. Functionally, aminotransferase that catalyzes the conversion of aromatic amino acids and 2-oxoglutarate into corresponding aromatic oxo acids and L-glutamate. This chain is Aromatic amino acid aminotransferase, found in Mycolicibacterium smegmatis (strain ATCC 700084 / mc(2)155) (Mycobacterium smegmatis).